The sequence spans 161 residues: Phosphopantetheine adenylyltransferase (161 aa).

Substrate is bound at residue S9. Residues 9 to 10 and H17 contribute to the ATP site; that span reads SF. The substrate site is built by K41, T73, and R87. ATP-binding positions include 88–90, E98, and 123–129; these read GLR and YSFISST.

The protein belongs to the bacterial CoaD family. In terms of assembly, homohexamer. Mg(2+) serves as cofactor.

The protein localises to the cytoplasm. The enzyme catalyses (R)-4'-phosphopantetheine + ATP + H(+) = 3'-dephospho-CoA + diphosphate. It participates in cofactor biosynthesis; coenzyme A biosynthesis; CoA from (R)-pantothenate: step 4/5. Reversibly transfers an adenylyl group from ATP to 4'-phosphopantetheine, yielding dephospho-CoA (dPCoA) and pyrophosphate. The sequence is that of Phosphopantetheine adenylyltransferase from Desulforamulus reducens (strain ATCC BAA-1160 / DSM 100696 / MI-1) (Desulfotomaculum reducens).